The primary structure comprises 270 residues: 3-phenylpropionate-dihydrodiol/cinnamic acid-dihydrodiol dehydrogenase (270 aa).

10 to 34 (FITGGGSGLGLALVERFIEEGAQVA) is an NAD(+) binding site. Ser-143 is a substrate binding site. Catalysis depends on Tyr-156, which acts as the Proton acceptor.

It belongs to the short-chain dehydrogenases/reductases (SDR) family.

The catalysed reaction is 3-(cis-5,6-dihydroxycyclohexa-1,3-dien-1-yl)propanoate + NAD(+) = 3-(2,3-dihydroxyphenyl)propanoate + NADH + H(+). It catalyses the reaction (2E)-3-(cis-5,6-dihydroxycyclohexa-1,3-dien-1-yl)prop-2-enoate + NAD(+) = (2E)-3-(2,3-dihydroxyphenyl)prop-2-enoate + NADH + H(+). It functions in the pathway aromatic compound metabolism; 3-phenylpropanoate degradation. Converts 3-phenylpropionate-dihydrodiol (PP-dihydrodiol) and cinnamic acid-dihydrodiol (CI-dihydrodiol) into 3-(2,3-dihydroxylphenyl)propanoic acid (DHPP) and 2,3-dihydroxicinnamic acid (DHCI), respectively. This is 3-phenylpropionate-dihydrodiol/cinnamic acid-dihydrodiol dehydrogenase from Escherichia coli (strain K12 / MC4100 / BW2952).